Here is a 321-residue protein sequence, read N- to C-terminus: ATP-dependent 6-phosphofructokinase (321 aa).

Glycine 12 serves as a coordination point for ATP. Residues 22–26 (RAVVR) and 55–60 (RYSVSD) contribute to the ADP site. ATP-binding positions include 73–74 (RF) and 103–106 (GDGS). A Mg(2+)-binding site is contributed by aspartate 104. Residue 127 to 129 (TID) participates in substrate binding. The active-site Proton acceptor is the aspartate 129. Arginine 156 provides a ligand contact to ADP. Substrate-binding positions include arginine 164 and 171–173 (MGR). Residues 187 to 189 (GCE) and 215 to 217 (KRH) each bind ADP. Residues glutamate 224, arginine 245, and 251-254 (HVQR) contribute to the substrate site.

It belongs to the phosphofructokinase type A (PFKA) family. ATP-dependent PFK group I subfamily. Prokaryotic clade 'B1' sub-subfamily. In terms of assembly, homotetramer. The cofactor is Mg(2+).

Its subcellular location is the cytoplasm. The catalysed reaction is beta-D-fructose 6-phosphate + ATP = beta-D-fructose 1,6-bisphosphate + ADP + H(+). It functions in the pathway carbohydrate degradation; glycolysis; D-glyceraldehyde 3-phosphate and glycerone phosphate from D-glucose: step 3/4. With respect to regulation, allosterically activated by ADP and other diphosphonucleosides, and allosterically inhibited by phosphoenolpyruvate. In terms of biological role, catalyzes the phosphorylation of D-fructose 6-phosphate to fructose 1,6-bisphosphate by ATP, the first committing step of glycolysis. The polypeptide is ATP-dependent 6-phosphofructokinase (Actinobacillus succinogenes (strain ATCC 55618 / DSM 22257 / CCUG 43843 / 130Z)).